We begin with the raw amino-acid sequence, 349 residues long: Protein-glutamate methylesterase/protein-glutamine glutaminase (349 aa).

Residues 5 to 122 (RVLSVDDSAL…REGMLAYSEM (118 aa)) form the Response regulatory domain. 4-aspartylphosphate is present on D56. In terms of domain architecture, CheB-type methylesterase spans 152-344 (LLSSEKLIAI…QQMLAKISAG (193 aa)). Catalysis depends on residues S164, H190, and D286.

This sequence belongs to the CheB family. Phosphorylated by CheA. Phosphorylation of the N-terminal regulatory domain activates the methylesterase activity.

Its subcellular location is the cytoplasm. The catalysed reaction is [protein]-L-glutamate 5-O-methyl ester + H2O = L-glutamyl-[protein] + methanol + H(+). It catalyses the reaction L-glutaminyl-[protein] + H2O = L-glutamyl-[protein] + NH4(+). Functionally, involved in chemotaxis. Part of a chemotaxis signal transduction system that modulates chemotaxis in response to various stimuli. Catalyzes the demethylation of specific methylglutamate residues introduced into the chemoreceptors (methyl-accepting chemotaxis proteins or MCP) by CheR. Also mediates the irreversible deamidation of specific glutamine residues to glutamic acid. The sequence is that of Protein-glutamate methylesterase/protein-glutamine glutaminase from Escherichia coli O157:H7.